The sequence spans 198 residues: Ribosome maturation factor RimP (198 aa).

This sequence belongs to the RimP family.

Its subcellular location is the cytoplasm. In terms of biological role, required for maturation of 30S ribosomal subunits. This is Ribosome maturation factor RimP from Rhizobium rhizogenes (strain K84 / ATCC BAA-868) (Agrobacterium radiobacter).